We begin with the raw amino-acid sequence, 675 residues long: Potassium-transporting ATPase ATP-binding subunit (675 aa).

The next 4 membrane-spanning stretches (helical) occupy residues 38–58 (VMFVVYLGTALTAYLTVANLV), 67–87 (LAITLLLLLTVLFANFAEGMA), 216–236 (IALSILLSGLTLIFLLAVVTL), and 253–273 (IALLVCLIPTTIGGLLPAIGI). Residue Asp-304 is the 4-aspartylphosphate intermediate of the active site. Residues Asp-341, Glu-345, 371–378 (FTAQTRMS), and Lys-389 contribute to the ATP site. Mg(2+) contacts are provided by Asp-512 and Asp-516. 3 consecutive transmembrane segments (helical) span residues 582–602 (FAILPALFVTAYPQLGVLNVM), 610–630 (AVLSAVIFNALIIPVLIPLAL), and 654–674 (GGILVPFIAIKLIDLLIGGLM).

It belongs to the cation transport ATPase (P-type) (TC 3.A.3) family. Type IA subfamily. As to quaternary structure, the system is composed of three essential subunits: KdpA, KdpB and KdpC.

It localises to the cell membrane. The enzyme catalyses K(+)(out) + ATP + H2O = K(+)(in) + ADP + phosphate + H(+). Functionally, part of the high-affinity ATP-driven potassium transport (or Kdp) system, which catalyzes the hydrolysis of ATP coupled with the electrogenic transport of potassium into the cytoplasm. This subunit is responsible for energy coupling to the transport system and for the release of the potassium ions to the cytoplasm. The chain is Potassium-transporting ATPase ATP-binding subunit from Deinococcus radiodurans (strain ATCC 13939 / DSM 20539 / JCM 16871 / CCUG 27074 / LMG 4051 / NBRC 15346 / NCIMB 9279 / VKM B-1422 / R1).